Reading from the N-terminus, the 223-residue chain is uncharacterized protein (223 aa).

The interval 117–148 (THAHTHAHTHGHTHTRAHSTHAHTHAHSHYHT) is disordered.

This is an uncharacterized protein from Homo sapiens (Human).